Consider the following 199-residue polypeptide: Fe/S biogenesis protein NfuA (199 aa).

Residues C151 and C154 each coordinate [4Fe-4S] cluster.

The protein belongs to the NfuA family. As to quaternary structure, homodimer. [4Fe-4S] cluster is required as a cofactor.

In terms of biological role, involved in iron-sulfur cluster biogenesis. Binds a 4Fe-4S cluster, can transfer this cluster to apoproteins, and thereby intervenes in the maturation of Fe/S proteins. Could also act as a scaffold/chaperone for damaged Fe/S proteins. This chain is Fe/S biogenesis protein NfuA, found in Xanthomonas oryzae pv. oryzae (strain PXO99A).